We begin with the raw amino-acid sequence, 574 residues long: Arginine--tRNA ligase (574 aa).

The 'HIGH' region motif lies at 126 to 136; it reads PNIAKRMHVGH.

Belongs to the class-I aminoacyl-tRNA synthetase family. As to quaternary structure, monomer.

The protein resides in the cytoplasm. It carries out the reaction tRNA(Arg) + L-arginine + ATP = L-arginyl-tRNA(Arg) + AMP + diphosphate. The protein is Arginine--tRNA ligase of Chloroflexus aurantiacus (strain ATCC 29366 / DSM 635 / J-10-fl).